A 283-amino-acid polypeptide reads, in one-letter code: Glutamate racemase (283 aa).

Residues 28–29 and 60–61 each bind substrate; these read DS and YG. Catalysis depends on C92, which acts as the Proton donor/acceptor. 93 to 94 provides a ligand contact to substrate; the sequence is NT. C204 acts as the Proton donor/acceptor in catalysis. 205-206 provides a ligand contact to substrate; that stretch reads TH.

This sequence belongs to the aspartate/glutamate racemases family.

It carries out the reaction L-glutamate = D-glutamate. The protein operates within cell wall biogenesis; peptidoglycan biosynthesis. In terms of biological role, provides the (R)-glutamate required for cell wall biosynthesis. This Salmonella gallinarum (strain 287/91 / NCTC 13346) protein is Glutamate racemase.